We begin with the raw amino-acid sequence, 336 residues long: MTSSVIHQAVIDAYRVLDTGEPLDRETALRLAALPGDAVLDLASLAHKVRLRYAGEAASLHACSIMNAKSGECGENCRFCAQSRHNSASIDVYDLAGEDAVLRQAEEAVDSGIPHFGIVTSGYGYLKITPEFNRILGMIDMLHRELPGLNVCASLGVLGEETSAALAAHGIAHYNINIQVAPSRYSDLIADTHTVVERIATVRLLRKHRIPVCCGGILGVGESMTERLEMIFALSELDVSVIPLNVLVPIDGTPLEGHRTADIADIVKTFAICRLVHPRTIIKFAAGRETVMKDFQGLLMLSGANGFLTGGYLTTRGREIDADRELGRQLESFTEG.

In terms of domain architecture, Radical SAM core spans 55-288 (GEAASLHACS…RTIIKFAAGR (234 aa)). [4Fe-4S] cluster contacts are provided by Cys73, Cys77, and Cys80. Residues Cys152, Cys213, and Lys283 each coordinate [2Fe-2S] cluster.

This sequence belongs to the radical SAM superfamily. Biotin synthase family. In terms of assembly, homodimer. Requires [4Fe-4S] cluster as cofactor. It depends on [2Fe-2S] cluster as a cofactor.

The enzyme catalyses (4R,5S)-dethiobiotin + (sulfur carrier)-SH + 2 reduced [2Fe-2S]-[ferredoxin] + 2 S-adenosyl-L-methionine = (sulfur carrier)-H + biotin + 2 5'-deoxyadenosine + 2 L-methionine + 2 oxidized [2Fe-2S]-[ferredoxin]. The protein operates within cofactor biosynthesis; biotin biosynthesis; biotin from 7,8-diaminononanoate: step 2/2. Its function is as follows. Catalyzes the conversion of dethiobiotin (DTB) to biotin by the insertion of a sulfur atom into dethiobiotin via a radical-based mechanism. The sequence is that of Biotin synthase from Chlorobium limicola (strain DSM 245 / NBRC 103803 / 6330).